The following is a 264-amino-acid chain: Sirohydrochlorin cobaltochelatase (264 aa).

The Co-sirohydrochlorin site is built by G45, I84, I85, D88, E89, and K92. H145 acts as the Proton acceptor in catalysis. 2 residues coordinate Co(2+): H145 and E175. Residues L202, V203, and H207 each contribute to the Co-sirohydrochlorin site. Residue H207 coordinates Co(2+).

Belongs to the CbiK family. As to quaternary structure, homotrimer.

The enzyme catalyses Co-sirohydrochlorin + 2 H(+) = sirohydrochlorin + Co(2+). The catalysed reaction is Co-precorrin-2 + 3 H(+) = precorrin-2 + Co(2+). It participates in cofactor biosynthesis; adenosylcobalamin biosynthesis; cob(II)yrinate a,c-diamide from sirohydrochlorin (anaerobic route): step 1/10. Functionally, cobalt chelatase responsible for the insertion of cobalt during anaerobic cobalamin biosynthesis. Can catalyze the insertion of Co(2+) into either sirohydrochlorin or precorrin-2. It is not clear which is the natural substrate in Salmonella. This chain is Sirohydrochlorin cobaltochelatase, found in Salmonella typhimurium (strain LT2 / SGSC1412 / ATCC 700720).